Here is a 447-residue protein sequence, read N- to C-terminus: Na(+)-translocating NADH-quinone reductase subunit A (447 aa).

Belongs to the NqrA family. In terms of assembly, composed of six subunits; NqrA, NqrB, NqrC, NqrD, NqrE and NqrF.

The enzyme catalyses a ubiquinone + n Na(+)(in) + NADH + H(+) = a ubiquinol + n Na(+)(out) + NAD(+). In terms of biological role, NQR complex catalyzes the reduction of ubiquinone-1 to ubiquinol by two successive reactions, coupled with the transport of Na(+) ions from the cytoplasm to the periplasm. NqrA to NqrE are probably involved in the second step, the conversion of ubisemiquinone to ubiquinol. The protein is Na(+)-translocating NADH-quinone reductase subunit A of Cellvibrio japonicus (strain Ueda107) (Pseudomonas fluorescens subsp. cellulosa).